Consider the following 259-residue polypeptide: DNA-directed RNA polymerase subunit Rpo3 (259 aa).

The protein belongs to the archaeal Rpo3/eukaryotic RPB3 RNA polymerase subunit family. Part of the RNA polymerase complex.

The protein resides in the cytoplasm. It catalyses the reaction RNA(n) + a ribonucleoside 5'-triphosphate = RNA(n+1) + diphosphate. DNA-dependent RNA polymerase (RNAP) catalyzes the transcription of DNA into RNA using the four ribonucleoside triphosphates as substrates. The sequence is that of DNA-directed RNA polymerase subunit Rpo3 from Pyrobaculum arsenaticum (strain DSM 13514 / JCM 11321 / PZ6).